The chain runs to 297 residues: Small ribosomal subunit biogenesis GTPase RsgA (297 aa).

The 159-residue stretch at 65–223 (TNEIGRPAVA…IADTPGFSAI (159 aa)) folds into the CP-type G domain. Residues 114–117 (SKAD) and 166–174 (GQSGAGKST) each bind GTP. Cys-247, Cys-252, His-254, and Cys-260 together coordinate Zn(2+).

Belongs to the TRAFAC class YlqF/YawG GTPase family. RsgA subfamily. In terms of assembly, monomer. Associates with 30S ribosomal subunit, binds 16S rRNA. Zn(2+) is required as a cofactor.

The protein localises to the cytoplasm. In terms of biological role, one of several proteins that assist in the late maturation steps of the functional core of the 30S ribosomal subunit. Helps release RbfA from mature subunits. May play a role in the assembly of ribosomal proteins into the subunit. Circularly permuted GTPase that catalyzes slow GTP hydrolysis, GTPase activity is stimulated by the 30S ribosomal subunit. This is Small ribosomal subunit biogenesis GTPase RsgA from Lactobacillus gasseri (strain ATCC 33323 / DSM 20243 / BCRC 14619 / CIP 102991 / JCM 1131 / KCTC 3163 / NCIMB 11718 / NCTC 13722 / AM63).